The following is a 553-amino-acid chain: Protein TIC 55, chloroplastic (553 aa).

Residues 1 to 60 (MALALASANSFLLPTKTHFALHVSPPPSKKTLLCTNPSSNFSFNKALSSRRRKQAWCVAA) constitute a chloroplast transit peptide. Topologically, residues 61–492 (AADVKDATLL…GCSSAIKAFQ (432 aa)) are stromal. One can recognise a Rieske domain in the interval 103–208 (WYPLYLTKNV…VRDSQGVLWV (106 aa)). Residues C144, H146, C163, and H166 each coordinate [2Fe-2S] cluster. Residues H257 and H262 each coordinate Fe cation. A helical transmembrane segment spans residues 493-513 (IWKNVLSGVVVALAALAILVS). Residues 514–518 (GRQWK) are Chloroplast intermembrane-facing. A helical transmembrane segment spans residues 519 to 539 (VLLLASASLCSVGVYACSTAI). At 540-553 (AMNTTNFIRVHRRL) the chain is on the stromal side.

As to quaternary structure, part of the Tic complex. Interacts with TIC62 and TIC110. Requires [2Fe-2S] cluster as cofactor.

The protein localises to the plastid. It localises to the chloroplast inner membrane. Involved in protein precursor import into chloroplasts. Part of the redox regulon consisting of TIC32, TIC 55 and TIC62. This chain is Protein TIC 55, chloroplastic (TIC55), found in Pisum sativum (Garden pea).